The primary structure comprises 295 residues: Pyridoxal 5'-phosphate synthase subunit PdxS (295 aa).

Residue Asp25 coordinates D-ribose 5-phosphate. Residue Lys82 is the Schiff-base intermediate with D-ribose 5-phosphate of the active site. Gly154 is a D-ribose 5-phosphate binding site. Residue Arg166 participates in D-glyceraldehyde 3-phosphate binding. D-ribose 5-phosphate-binding positions include Gly215 and 236–237 (GS).

It belongs to the PdxS/SNZ family. In terms of assembly, in the presence of PdxT, forms a dodecamer of heterodimers.

It catalyses the reaction aldehydo-D-ribose 5-phosphate + D-glyceraldehyde 3-phosphate + L-glutamine = pyridoxal 5'-phosphate + L-glutamate + phosphate + 3 H2O + H(+). It functions in the pathway cofactor biosynthesis; pyridoxal 5'-phosphate biosynthesis. In terms of biological role, catalyzes the formation of pyridoxal 5'-phosphate from ribose 5-phosphate (RBP), glyceraldehyde 3-phosphate (G3P) and ammonia. The ammonia is provided by the PdxT subunit. Can also use ribulose 5-phosphate and dihydroxyacetone phosphate as substrates, resulting from enzyme-catalyzed isomerization of RBP and G3P, respectively. In Heliobacterium modesticaldum (strain ATCC 51547 / Ice1), this protein is Pyridoxal 5'-phosphate synthase subunit PdxS.